Reading from the N-terminus, the 216-residue chain is Maleylacetoacetate isomerase (216 aa).

The residue at position 1 (methionine 1) is an N-acetylmethionine. The 84-residue stretch at 4 to 87 (GKPILYSYFR…YLEETRPIPR (84 aa)) folds into the GST N-terminal domain. Glutathione-binding positions include 14–19 (SSCSWR) and glutamine 45. At lysine 57 the chain carries N6-succinyllysine. Glutathione is bound by residues valine 59, 71–72 (QS), glutamine 111, and 115–117 (NLS). The GST C-terminal domain maps to 92–212 (DPQKRAIVRM…HPRRQPDTPA (121 aa)). Residue threonine 136 is modified to Phosphothreonine. The residue at position 137 (serine 137) is a Phosphoserine. Position 177 is an N6-succinyllysine (lysine 177). Serine 181 is subject to Phosphoserine.

Belongs to the GST superfamily. Zeta family. In terms of assembly, homodimer. Requires glutathione as cofactor. Expressed in liver, kidney, seminal glands and breast.

The protein resides in the cytoplasm. The catalysed reaction is 4-maleylacetoacetate = 4-fumarylacetoacetate. It catalyses the reaction RX + glutathione = an S-substituted glutathione + a halide anion + H(+). It participates in amino-acid degradation; L-phenylalanine degradation; acetoacetate and fumarate from L-phenylalanine: step 5/6. In terms of biological role, probable bifunctional enzyme showing minimal glutathione-conjugating activity with ethacrynic acid and 7-chloro-4-nitrobenz-2-oxa-1, 3-diazole and maleylacetoacetate isomerase activity. Also has low glutathione peroxidase activity with t-butyl and cumene hydroperoxides. Is able to catalyze the glutathione dependent oxygenation of dichloroacetic acid to glyoxylic acid. This chain is Maleylacetoacetate isomerase (Gstz1), found in Mus musculus (Mouse).